We begin with the raw amino-acid sequence, 182 residues long: Ribosome maturation factor RimM (182 aa).

The region spanning 103–182 (EGDYYWKDLM…TIEVDWDPGF (80 aa)) is the PRC barrel domain.

It belongs to the RimM family. As to quaternary structure, binds ribosomal protein uS19.

It localises to the cytoplasm. Its function is as follows. An accessory protein needed during the final step in the assembly of 30S ribosomal subunit, possibly for assembly of the head region. Essential for efficient processing of 16S rRNA. May be needed both before and after RbfA during the maturation of 16S rRNA. It has affinity for free ribosomal 30S subunits but not for 70S ribosomes. The chain is Ribosome maturation factor RimM from Klebsiella pneumoniae subsp. pneumoniae (strain ATCC 700721 / MGH 78578).